A 74-amino-acid chain; its full sequence is Conotoxin Vt11.7 (74 aa).

A signal peptide spans 1–26 (MMFRLTSVGCFLLVIVLLNVAVLTNA). Intrachain disulfides connect C28-C42, C35-C47, C41-C51, and C46-C55. The propeptide occupies 62 to 74 (AHGHGLLRFWGQR).

It belongs to the conotoxin I2 superfamily. In terms of tissue distribution, expressed by the venom duct.

It is found in the secreted. This chain is Conotoxin Vt11.7, found in Conus planorbis (Planorbis cone).